Here is a 319-residue protein sequence, read N- to C-terminus: Acetyl-coenzyme A carboxylase carboxyl transferase subunit alpha (319 aa).

The region spanning 35–296 (NIDEEVHRLR…KTQLLADLAD (262 aa)) is the CoA carboxyltransferase C-terminal domain.

This sequence belongs to the AccA family. Acetyl-CoA carboxylase is a heterohexamer composed of biotin carboxyl carrier protein (AccB), biotin carboxylase (AccC) and two subunits each of ACCase subunit alpha (AccA) and ACCase subunit beta (AccD).

It localises to the cytoplasm. It carries out the reaction N(6)-carboxybiotinyl-L-lysyl-[protein] + acetyl-CoA = N(6)-biotinyl-L-lysyl-[protein] + malonyl-CoA. It participates in lipid metabolism; malonyl-CoA biosynthesis; malonyl-CoA from acetyl-CoA: step 1/1. Its function is as follows. Component of the acetyl coenzyme A carboxylase (ACC) complex. First, biotin carboxylase catalyzes the carboxylation of biotin on its carrier protein (BCCP) and then the CO(2) group is transferred by the carboxyltransferase to acetyl-CoA to form malonyl-CoA. The polypeptide is Acetyl-coenzyme A carboxylase carboxyl transferase subunit alpha (Cronobacter sakazakii (strain ATCC BAA-894) (Enterobacter sakazakii)).